The following is a 371-amino-acid chain: ETS-related transcription factor Elf-3 (371 aa).

The region spanning 46-132 (NPQMSLEGTE…AQLRDLTSSS (87 aa)) is the PNT domain. The short motif at 137–145 (SWIIELLEK) is the 9aaTAD element. A disordered region spans residues 173–251 (GQQASPYHPG…HGKRKRGRPR (79 aa)). Residues 181–216 (PGSCGAGAPSPGSSDVSTAGTGASRSSHSSDSGGSD) are compositionally biased toward low complexity. The segment covering 231 to 241 (GFRDCKKGDPK) has biased composition (basic and acidic residues). A compositionally biased stretch (basic residues) spans 242–251 (HGKRKRGRPR). Positions 273-355 (THLWEFIRDI…DGRRLVYKFG (83 aa)) form a DNA-binding region, ETS.

The protein belongs to the ETS family. In terms of assembly, interacts with TBP. Interacts with CREBBP and EP300; these act as transcriptional coactivators of ELF3 and positively modulate its function. Interacts with XRCC5/KU86 and XRCC6/KU70; these inhibit the ability of ELF3 to bind DNA and negatively modulate its transcriptional activity. Associated with CLND7 and POU2F3. Interacts with ZNF768. Expressed exclusively in tissues containing a high content of terminally differentiated epithelial cells including mammary gland, colon, trachea, kidney, prostate, uterus, stomach and skin.

It localises to the cytoplasm. The protein resides in the nucleus. Functionally, transcriptional activator that binds and transactivates ETS sequences containing the consensus nucleotide core sequence GGA[AT]. Acts synergistically with POU2F3 to transactivate the SPRR2A promoter and with RUNX1 to transactivate the ANGPT1 promoter. Also transactivates collagenase, CCL20, CLND7, FLG, KRT8, NOS2, PTGS2, SPRR2B, TGFBR2 and TGM3 promoters. Represses KRT4 promoter activity. Involved in mediating vascular inflammation. May play an important role in epithelial cell differentiation and tumorigenesis. May be a critical downstream effector of the ERBB2 signaling pathway. May be associated with mammary gland development and involution. Plays an important role in the regulation of transcription with TATA-less promoters in preimplantation embryos, which is essential in preimplantation development. This is ETS-related transcription factor Elf-3 from Homo sapiens (Human).